A 308-amino-acid chain; its full sequence is ADP-L-glycero-D-manno-heptose-6-epimerase (308 aa).

Residues 10 to 11, 31 to 32, Lys38, Lys53, 75 to 79, and Asn92 each bind NADP(+); these read FI, DN, and EGACS. Tyr139 serves as the catalytic Proton acceptor. Residue Lys143 participates in NADP(+) binding. Residue Asn168 participates in substrate binding. NADP(+)-binding residues include Val169 and Lys177. The active-site Proton acceptor is the Lys177. Residues Ser179, His186, 200-203, Arg208, and Tyr271 contribute to the substrate site; that span reads FAGS.

The protein belongs to the NAD(P)-dependent epimerase/dehydratase family. HldD subfamily. In terms of assembly, homopentamer. NADP(+) serves as cofactor.

The catalysed reaction is ADP-D-glycero-beta-D-manno-heptose = ADP-L-glycero-beta-D-manno-heptose. Its pathway is nucleotide-sugar biosynthesis; ADP-L-glycero-beta-D-manno-heptose biosynthesis; ADP-L-glycero-beta-D-manno-heptose from D-glycero-beta-D-manno-heptose 7-phosphate: step 4/4. Catalyzes the interconversion between ADP-D-glycero-beta-D-manno-heptose and ADP-L-glycero-beta-D-manno-heptose via an epimerization at carbon 6 of the heptose. The chain is ADP-L-glycero-D-manno-heptose-6-epimerase from Actinobacillus succinogenes (strain ATCC 55618 / DSM 22257 / CCUG 43843 / 130Z).